Here is a 263-residue protein sequence, read N- to C-terminus: Transcription factor bHLH27 (263 aa).

The segment covering 32 to 47 has biased composition (low complexity); it reads EAFSGSGESSSPDGAA. The disordered stretch occupies residues 32 to 61; the sequence is EAFSGSGESSSPDGAATSPASSKNVVSERN. Positions 49–58 are enriched in polar residues; that stretch reads SPASSKNVVS. One can recognise a bHLH domain in the interval 50–99; it reads PASSKNVVSERNRRQKLNQRLFALRSVVPNISKLDKASVIKDSIDYMQEL.

In terms of assembly, homodimer. Expressed constitutively in roots, leaves, stems, and flowers.

The protein resides in the nucleus. The sequence is that of Transcription factor bHLH27 (BHLH27) from Arabidopsis thaliana (Mouse-ear cress).